We begin with the raw amino-acid sequence, 449 residues long: Deoxyguanosinetriphosphate triphosphohydrolase-like protein (449 aa).

Positions 1–27 (MTSSVWQERRHGEDKQRRNDHRSPYQR) are disordered. The segment covering 7–27 (QERRHGEDKQRRNDHRSPYQR) has biased composition (basic and acidic residues). Residues 59–255 (RLTHSLEVSQ…MELADDIAYA (197 aa)) enclose the HD domain.

Belongs to the dGTPase family. Type 2 subfamily.

The chain is Deoxyguanosinetriphosphate triphosphohydrolase-like protein from Shewanella baltica (strain OS223).